The primary structure comprises 475 residues: Sulfate adenylyltransferase subunit 1 (475 aa).

Positions 25–239 constitute a tr-type G domain; the sequence is KSLLRFLTCG…EVLETVEIQR (215 aa). Residues 34-41 form a G1 region; the sequence is GSVDDGKS. GTP is bound at residue 34–41; that stretch reads GSVDDGKS. Residues 92-96 are G2; it reads GITID. The tract at residues 113–116 is G3; it reads DTPG. GTP contacts are provided by residues 113 to 117 and 168 to 171; these read DTPGH and NKMD. The segment at 168-171 is G4; the sequence is NKMD. Residues 206-208 are G5; it reads SAL.

The protein belongs to the TRAFAC class translation factor GTPase superfamily. Classic translation factor GTPase family. CysN/NodQ subfamily. In terms of assembly, heterodimer composed of CysD, the smaller subunit, and CysN.

The catalysed reaction is sulfate + ATP + H(+) = adenosine 5'-phosphosulfate + diphosphate. The protein operates within sulfur metabolism; hydrogen sulfide biosynthesis; sulfite from sulfate: step 1/3. Functionally, with CysD forms the ATP sulfurylase (ATPS) that catalyzes the adenylation of sulfate producing adenosine 5'-phosphosulfate (APS) and diphosphate, the first enzymatic step in sulfur assimilation pathway. APS synthesis involves the formation of a high-energy phosphoric-sulfuric acid anhydride bond driven by GTP hydrolysis by CysN coupled to ATP hydrolysis by CysD. This is Sulfate adenylyltransferase subunit 1 from Escherichia coli (strain SE11).